The chain runs to 156 residues: Ribosomal RNA large subunit methyltransferase H (156 aa).

Residues leucine 73, glycine 104, and 123–128 (ISSMTL) contribute to the S-adenosyl-L-methionine site.

It belongs to the RNA methyltransferase RlmH family. Homodimer.

It localises to the cytoplasm. It carries out the reaction pseudouridine(1915) in 23S rRNA + S-adenosyl-L-methionine = N(3)-methylpseudouridine(1915) in 23S rRNA + S-adenosyl-L-homocysteine + H(+). Specifically methylates the pseudouridine at position 1915 (m3Psi1915) in 23S rRNA. This Burkholderia cenocepacia (strain HI2424) protein is Ribosomal RNA large subunit methyltransferase H.